The following is a 355-amino-acid chain: MAQPTFFTKPPATALADIATLTKALLVDPTRGDHVITGLASLDEAGPMHLAFFDNLKYADQLKATRAGACLVSPRFEAQVPAHVAVLRAAQPFRAFVRIAREWHGDALRPQSWVGNDGIAPSAIIDPTARLEDGVIVDPLAVIGADVEIGSGTVVGVGAVIGPGVKIGRDCNVGARTAIQCALIGNDVLIHPGCSIGQDGYGFIFFGPEGHLKVPQTGRVLIQNNVEVGAGTTIDRGSLRDTVIGEGTKIDNQVQIGHNVTIGRNCLLAAQIGLAGSLTIGDNVALGAKVGINNHLKIGDGAQVTAMSGVKDDIPPNGRWGGFFAKPTKQWFKEIIAVERLVRDSRADPKDEGRE.

His-258 acts as the Proton acceptor in catalysis.

It belongs to the transferase hexapeptide repeat family. LpxD subfamily. As to quaternary structure, homotrimer.

The catalysed reaction is a UDP-3-O-[(3R)-3-hydroxyacyl]-alpha-D-glucosamine + a (3R)-hydroxyacyl-[ACP] = a UDP-2-N,3-O-bis[(3R)-3-hydroxyacyl]-alpha-D-glucosamine + holo-[ACP] + H(+). It functions in the pathway bacterial outer membrane biogenesis; LPS lipid A biosynthesis. In terms of biological role, catalyzes the N-acylation of UDP-3-O-acylglucosamine using 3-hydroxyacyl-ACP as the acyl donor. Is involved in the biosynthesis of lipid A, a phosphorylated glycolipid that anchors the lipopolysaccharide to the outer membrane of the cell. The chain is UDP-3-O-acylglucosamine N-acyltransferase from Bradyrhizobium diazoefficiens (strain JCM 10833 / BCRC 13528 / IAM 13628 / NBRC 14792 / USDA 110).